The chain runs to 573 residues: Potassium-transporting ATPase potassium-binding subunit (573 aa).

10 consecutive transmembrane segments (helical) span residues 6–26 (ILFA…GSYI), 66–86 (FFSL…ILLL), 135–155 (ALAV…IALI), 177–197 (VFWI…FQGV), 257–277 (IQMV…GKWV), 283–303 (GWLI…VMTI), 382–402 (IFGG…LAVF), 428–448 (MFAL…AAVI), 493–513 (ITIA…VIML), and 537–557 (FIFA…TIFP).

The protein belongs to the KdpA family. As to quaternary structure, the system is composed of three essential subunits: KdpA, KdpB and KdpC.

It localises to the cell inner membrane. Part of the high-affinity ATP-driven potassium transport (or Kdp) system, which catalyzes the hydrolysis of ATP coupled with the electrogenic transport of potassium into the cytoplasm. This subunit binds the periplasmic potassium ions and delivers the ions to the membrane domain of KdpB through an intramembrane tunnel. In Francisella tularensis subsp. holarctica (strain FTNF002-00 / FTA), this protein is Potassium-transporting ATPase potassium-binding subunit.